Reading from the N-terminus, the 66-residue chain is Large ribosomal subunit protein bL33c (66 aa).

This sequence belongs to the bacterial ribosomal protein bL33 family.

Its subcellular location is the plastid. It localises to the chloroplast. This chain is Large ribosomal subunit protein bL33c, found in Saccharum officinarum (Sugarcane).